The chain runs to 625 residues: Endoglucanase D (625 aa).

The N-terminal stretch at serine 1–alanine 17 is a signal peptide. The Nucleophile role is filled by aspartate 177. Catalysis depends on residues histidine 492 and aspartate 522. Glutamate 531 (proton donor) is an active-site residue. Residues asparagine 555–isoleucine 625 form the Dockerin domain.

This sequence belongs to the glycosyl hydrolase 9 (cellulase E) family. Requires Ca(2+) as cofactor.

The catalysed reaction is Endohydrolysis of (1-&gt;4)-beta-D-glucosidic linkages in cellulose, lichenin and cereal beta-D-glucans.. In terms of biological role, this enzyme catalyzes the endohydrolysis of 1,4-beta-glucosidic linkages in cellulose, lichenin and cereal beta-D-glucans. This is Endoglucanase D (celD) from Acetivibrio thermocellus (Hungateiclostridium thermocellum).